The primary structure comprises 168 residues: Small ribosomal subunit protein uS5 (168 aa).

The S5 DRBM domain maps to Leu-13–Val-76.

Belongs to the universal ribosomal protein uS5 family. As to quaternary structure, part of the 30S ribosomal subunit. Contacts proteins S4 and S8.

Functionally, with S4 and S12 plays an important role in translational accuracy. In terms of biological role, located at the back of the 30S subunit body where it stabilizes the conformation of the head with respect to the body. This Alkaliphilus oremlandii (strain OhILAs) (Clostridium oremlandii (strain OhILAs)) protein is Small ribosomal subunit protein uS5.